A 109-amino-acid polypeptide reads, in one-letter code: uncharacterized protein (109 aa).

This is an uncharacterized protein from Autographa californica nuclear polyhedrosis virus (AcMNPV).